The following is a 27-amino-acid chain: Cationic protein C1 (27 aa).

The protein resides in the secreted. It is found in the nematocyst. In Bunodosoma caissarum (Sea anemone), this protein is Cationic protein C1.